The sequence spans 157 residues: Transcription elongation factor GreA (157 aa).

Residues leucine 9–isoleucine 30 adopt a coiled-coil conformation.

Belongs to the GreA/GreB family.

In terms of biological role, necessary for efficient RNA polymerase transcription elongation past template-encoded arresting sites. The arresting sites in DNA have the property of trapping a certain fraction of elongating RNA polymerases that pass through, resulting in locked ternary complexes. Cleavage of the nascent transcript by cleavage factors such as GreA or GreB allows the resumption of elongation from the new 3'terminus. GreA releases sequences of 2 to 3 nucleotides. This Magnetococcus marinus (strain ATCC BAA-1437 / JCM 17883 / MC-1) protein is Transcription elongation factor GreA.